We begin with the raw amino-acid sequence, 224 residues long: Adenylate kinase (224 aa).

An ATP-binding site is contributed by 10 to 15; it reads GSGKST. The interval 30-59 is NMP; the sequence is ASGDIIRAEINKGNALGREMKKYIEKGDLL. Residues S31, R36, 57 to 59, 83 to 86, and Q90 each bind AMP; these read DLL and GYPR. The interval 124–161 is LID; it reads GRRICRQCGAVYHIKYNPSKVPGKCDICGGEVIQREDD. R125 contacts ATP. Residues C128 and C131 each coordinate Zn(2+). Position 134–135 (134–135) interacts with ATP; it reads VY. The Zn(2+) site is built by C148 and C151. 2 residues coordinate AMP: R158 and R169. ATP is bound at residue G197.

This sequence belongs to the adenylate kinase family. As to quaternary structure, monomer.

The protein resides in the cytoplasm. The enzyme catalyses AMP + ATP = 2 ADP. It participates in purine metabolism; AMP biosynthesis via salvage pathway; AMP from ADP: step 1/1. Functionally, catalyzes the reversible transfer of the terminal phosphate group between ATP and AMP. Plays an important role in cellular energy homeostasis and in adenine nucleotide metabolism. This Thermococcus sibiricus (strain DSM 12597 / MM 739) protein is Adenylate kinase.